The following is a 374-amino-acid chain: Glutamine synthetase (374 aa).

The tract at residues 2–25 (TTSASSHLNKGIKQVYMSLPQGEK) is required for glutamine-induced ubiquitination by CRL4(CRBN) and proteasomal degradation. N6-acetyllysine occurs at positions 11 and 14. In terms of domain architecture, GS beta-grasp spans 24 to 106 (EKVQAMYIWI…VLCESFQVQF (83 aa)). The 261-residue stretch at 114-374 (LRHTCKRIMD…TGDEPFQYKN (261 aa)) folds into the GS catalytic domain. Residue Glu135 participates in ATP binding. Mn(2+)-binding residues include Glu135, Glu137, Glu197, and Glu204. Residue 204–209 (EFQIGP) coordinates ATP. 247–248 (NW) provides a ligand contact to L-glutamate. His254 contributes to the Mn(2+) binding site. Residues 256 to 258 (NFS), Arg320, and Arg325 contribute to the ATP site. Arg320 is an L-glutamate binding site. 337 to 339 (YFE) contributes to the ADP binding site. Glu339 lines the Mn(2+) pocket. Arg341 lines the L-glutamate pocket. Ser344 carries the phosphoserine modification.

This sequence belongs to the glutamine synthetase family. Decamer; composed of two pentamers. Interacts with PALMD. Interacts with RHOJ. Interacts with BEST2; this interaction tethers a fraction of GLUL to the membrane, causing a decrease of cytosolic glutamine synthase (GS) activity and inhibits the chloride channel activity of BEST2 by affecting the gating at the aperture in the absence of intracellular glutamate. Requires Mg(2+) as cofactor. Mn(2+) serves as cofactor. Post-translationally, palmitoylated; undergoes autopalmitoylation. In terms of processing, acetylated by EP300/p300; acetylation is stimulated by increased glutamine levels and promotes ubiquitin-mediated proteasomal degradation. Ubiquitinated by ZNRF1. Ubiquitinated by the DCX (DDB1-CUL4-X-box) E3 ubiquitin-protein ligase complex called CRL4(CRBN), leading to proteasomal degradation.

The protein resides in the cytoplasm. It localises to the cytosol. Its subcellular location is the microsome. It is found in the mitochondrion. The protein localises to the cell membrane. It carries out the reaction L-glutamate + NH4(+) + ATP = L-glutamine + ADP + phosphate + H(+). It catalyses the reaction L-cysteinyl-[protein] + hexadecanoyl-CoA = S-hexadecanoyl-L-cysteinyl-[protein] + CoA. Glutamine synthetase activity is inhibited by methionine sulfoximine (MSO). In terms of biological role, glutamine synthetase that catalyzes the ATP-dependent conversion of glutamate and ammonia to glutamine. Its role depends on tissue localization: in the brain, it regulates the levels of toxic ammonia and converts neurotoxic glutamate to harmless glutamine, whereas in the liver, it is one of the enzymes responsible for the removal of ammonia. Plays a key role in ammonium detoxification during erythropoiesis: the glutamine synthetase activity is required to remove ammonium generated by porphobilinogen deaminase (HMBS) during heme biosynthesis to prevent ammonium accumulation and oxidative stress. Essential for proliferation of fetal skin fibroblasts. Independently of its glutamine synthetase activity, required for endothelial cell migration during vascular development. Involved in angiogenesis by regulating membrane localization and activation of the GTPase RHOJ, possibly by promoting RHOJ palmitoylation. May act as a palmitoyltransferase for RHOJ: able to autopalmitoylate and then transfer the palmitoyl group to RHOJ. Plays a role in ribosomal 40S subunit biogenesis. Through the interaction with BEST2, inhibits BEST2 channel activity by affecting the gating at the aperture in the absence of intracellular L-glutamate, but sensitizes BEST2 to intracellular L-glutamate, which promotes the opening of BEST2 and thus relieves its inhibitory effect on BEST2. The chain is Glutamine synthetase from Macaca fascicularis (Crab-eating macaque).